The sequence spans 315 residues: Acetyl-coenzyme A carboxylase carboxyl transferase subunit alpha (315 aa).

One can recognise a CoA carboxyltransferase C-terminal domain in the interval 38-292 (RLQKKSNELT…KLRLKEDLAE (255 aa)).

This sequence belongs to the AccA family. In terms of assembly, acetyl-CoA carboxylase is a heterohexamer composed of biotin carboxyl carrier protein (AccB), biotin carboxylase (AccC) and two subunits each of ACCase subunit alpha (AccA) and ACCase subunit beta (AccD).

It localises to the cytoplasm. The enzyme catalyses N(6)-carboxybiotinyl-L-lysyl-[protein] + acetyl-CoA = N(6)-biotinyl-L-lysyl-[protein] + malonyl-CoA. The protein operates within lipid metabolism; malonyl-CoA biosynthesis; malonyl-CoA from acetyl-CoA: step 1/1. Functionally, component of the acetyl coenzyme A carboxylase (ACC) complex. First, biotin carboxylase catalyzes the carboxylation of biotin on its carrier protein (BCCP) and then the CO(2) group is transferred by the carboxyltransferase to acetyl-CoA to form malonyl-CoA. The polypeptide is Acetyl-coenzyme A carboxylase carboxyl transferase subunit alpha (Haemophilus influenzae (strain 86-028NP)).